Reading from the N-terminus, the 246-residue chain is Probable transcriptional regulatory protein Pden_1905 (246 aa).

The interval 1 to 21 (MAGHSKWANIQHRKGKQDKLR) is disordered.

The protein belongs to the TACO1 family.

Its subcellular location is the cytoplasm. The polypeptide is Probable transcriptional regulatory protein Pden_1905 (Paracoccus denitrificans (strain Pd 1222)).